A 531-amino-acid chain; its full sequence is Probable protein phosphatase 2C 66 (531 aa).

Residues 1–47 (MGSCLSSDLPPRAGAGAGASPGWPQRWRRRRQRGVERGGAVSGGGGG) are disordered. The span at 10-25 (PPRAGAGAGASPGWPQ) shows a compositional bias: low complexity. One can recognise a PPM-type phosphatase domain in the interval 88–401 (AACLHTQQGR…DDCAVVCLFL (314 aa)). Mn(2+) is bound by residues Asp123 and Gly124. Residues 151-172 (SANEDTSSHQNGSISGSVNSEE) are compositionally biased toward polar residues. The segment at 151–176 (SANEDTSSHQNGSISGSVNSEESPVV) is disordered. Residues Asp346 and Asp392 each coordinate Mn(2+).

The protein belongs to the PP2C family. Mg(2+) is required as a cofactor. Requires Mn(2+) as cofactor.

It carries out the reaction O-phospho-L-seryl-[protein] + H2O = L-seryl-[protein] + phosphate. It catalyses the reaction O-phospho-L-threonyl-[protein] + H2O = L-threonyl-[protein] + phosphate. The chain is Probable protein phosphatase 2C 66 from Oryza sativa subsp. japonica (Rice).